We begin with the raw amino-acid sequence, 220 residues long: 1-Cys peroxiredoxin A (220 aa).

The 162-residue stretch at 4-165 (LTIGDTVPNL…VVRAVDALQT (162 aa)) folds into the Thioredoxin domain. The active-site Cysteine sulfenic acid (-SOH) intermediate is the Cys-46. Positions 195 to 218 (KEKFPQGFDTADLPSGKGYLRFTK) match the Bipartite nuclear localization signal motif.

It belongs to the peroxiredoxin family. Prx6 subfamily.

The protein resides in the nucleus. Its subcellular location is the cytoplasm. It carries out the reaction a hydroperoxide + [thioredoxin]-dithiol = an alcohol + [thioredoxin]-disulfide + H2O. In terms of biological role, thiol-specific peroxidase that catalyzes the reduction of hydrogen peroxide and organic hydroperoxides to water and alcohols, respectively. Seems to contribute to the inhibition of germination during stress. The protein is 1-Cys peroxiredoxin A of Oryza sativa subsp. japonica (Rice).